The primary structure comprises 312 residues: Aquaporin-6 (312 aa).

Residues 1–50 (MDDKFDDDALPNSKTTAKDYEDKLPEYDYTTTFPNTWMRLREPFREYFAE) are Cytoplasmic-facing. Residues 51–71 (FVGVAVLIIFGVGADCQVVLS) form a helical membrane-spanning segment. Topologically, residues 72 to 89 (ANTGVASSPKGSYLSLNC) are extracellular. The helical transmembrane segment at 90-110 (GWAIGTAMGVWISGGISGGHI) threads the bilayer. The NPA 1 signature appears at 111–113 (NPA). Residues 111–128 (NPAVTLAMATWRGFPWWK) are Cytoplasmic-facing. The chain crosses the membrane as a helical span at residues 129 to 149 (VPGFIFAQLLGGIVGAGLVYV). Over 150–183 (NYIHAIDIVEGGRHIRTLDTAGLFATYAADYMTN) the chain is Extracellular. Residue N183 is glycosylated (N-linked (GlcNAc...) asparagine). Residues 184–204 (LSCFFSEFLATAVLIIVIHAM) form a helical membrane-spanning segment. The Cytoplasmic segment spans residues 205–213 (NDKRNTPPP). Residues 214–234 (AGIVPFVLFFLILGIGASLGM) form a helical membrane-spanning segment. The Extracellular segment spans residues 235 to 267 (ETGYAINPARDLGPRMLTAMVGYGRQVFAFRNQ). The NPA 2 motif lies at 241–243 (NPA). Residues 268–288 (YWIWCPVLAPFLGAQVGTIFY) traverse the membrane as a helical segment. The Cytoplasmic segment spans residues 289 to 312 (DLFFYKGQDNVFGRLGSHIHISPA).

It belongs to the MIP/aquaporin (TC 1.A.8) family.

It is found in the membrane. The enzyme catalyses H2O(in) = H2O(out). Water channel required to facilitate the transport of water across membranes. Does not mediate the transport carbon dioxide nor nitric oxide across the membrane. Plays a key role in root water transport of mycorrhizal plant such ectomycorrhizal white spruce or trembling aspen via the hydration at the hyphal-root interphase. Contributes in fungal cellular processes during the basidiocarp formation. The sequence is that of Aquaporin-6 from Laccaria bicolor (Bicoloured deceiver).